The chain runs to 230 residues: RING finger protein 141 (230 aa).

Gly-2 carries N-myristoyl glycine lipidation. The RING-type zinc-finger motif lies at 155 to 192 (CCICMDGRADLILPCAHSFCQKCIDKWSDRHRNCPICR).

Its subcellular location is the membrane. Functionally, may be involved in spermatogenesis. In Bos taurus (Bovine), this protein is RING finger protein 141 (RNF141).